The chain runs to 114 residues: Ribosome-binding factor A (114 aa).

Belongs to the RbfA family. As to quaternary structure, monomer. Binds 30S ribosomal subunits, but not 50S ribosomal subunits or 70S ribosomes.

The protein resides in the cytoplasm. One of several proteins that assist in the late maturation steps of the functional core of the 30S ribosomal subunit. Associates with free 30S ribosomal subunits (but not with 30S subunits that are part of 70S ribosomes or polysomes). Required for efficient processing of 16S rRNA. May interact with the 5'-terminal helix region of 16S rRNA. This Listeria monocytogenes serotype 4b (strain F2365) protein is Ribosome-binding factor A.